The following is a 587-amino-acid chain: Protein SIX6OS1 (587 aa).

The disordered stretch occupies residues 356–378 (TPQKQSNSNQWSEKGDKDAEYGD). The span at 357–367 (PQKQSNSNQWS) shows a compositional bias: polar residues. Over residues 368–378 (EKGDKDAEYGD) the composition is skewed to basic and acidic residues. Ser-439 carries the post-translational modification Phosphoserine. Positions 568-587 (SSSLKGFSSSSQNTTQFTFF) are disordered.

Interacts with SYCE1. Interacts with proteasome subunit PSMA8; to participate in meiosis progression during spermatogenesis. Highest expression in retina, skeletal muscle, testis and colon.

It is found in the chromosome. In terms of biological role, meiotic protein that localizes to the central element of the synaptonemal complex and is required for chromosome synapsis during meiotic recombination. Required for the appropriate processing of intermediate recombination nodules before crossover formation. The protein is Protein SIX6OS1 of Homo sapiens (Human).